The primary structure comprises 1195 residues: Zinc finger and BTB domain-containing protein 38 (1195 aa).

Residues 33-100 (CDVTIIVEDT…IYSSTVVVKR (68 aa)) form the BTB domain. Residue Lys-43 forms a Glycyl lysine isopeptide (Lys-Gly) (interchain with G-Cter in SUMO2) linkage. Ser-130 is modified (phosphoserine). Glycyl lysine isopeptide (Lys-Gly) (interchain with G-Cter in SUMO2) cross-links involve residues Lys-145, Lys-148, Lys-151, and Lys-259. The tract at residues 264-334 (RKPKTFSIPQ…QSSDVPGPPA (71 aa)) is disordered. Polar residues predominate over residues 270–280 (SIPQDSDSATE). The interaction with CBFA2T3 stretch occupies residues 300-523 (PAAVLTRSKS…RRYQCIFCLE (224 aa)). Phosphoserine is present on Ser-309. Positions 314–323 (GDVHFSREDE) are enriched in basic and acidic residues. Residues 342–364 (YNCSCCSKAFDSSTLLSAHMQLH) form a C2H2-type 1 zinc finger. The C2H2-type 2; degenerate zinc-finger motif lies at 371–395 (LVCKYCNKQFTTLNRLDRHEQICMR). C2H2-type zinc fingers lie at residues 460–482 (YSCV…ANVH), 488–510 (YPCH…EIWH), and 516–539 (YQCI…KSFH). Glycyl lysine isopeptide (Lys-Gly) (interchain with G-Cter in SUMO2) cross-links involve residues Lys-550, Lys-557, Lys-754, Lys-758, Lys-763, Lys-804, Lys-814, Lys-821, Lys-842, Lys-850, and Lys-857. The disordered stretch occupies residues 745–804 (SDPAVSQSLKDDSKPEPDKVGRFASRPKSIKEKKKTTSHTRGEIPEESNYVADPGGSLSK). Positions 753–765 (LKDDSKPEPDKVG) are enriched in basic and acidic residues. Disordered stretches follow at residues 871–891 (QEEP…PLGL) and 903–922 (FDDA…YYNY). Glycyl lysine isopeptide (Lys-Gly) (interchain with G-Cter in SUMO2) cross-links involve residues Lys-923, Lys-964, Lys-969, Lys-977, Lys-981, Lys-991, Lys-1017, and Lys-1026. 5 C2H2-type zinc fingers span residues 1010–1032 (YACE…MRCH), 1038–1060 (YQCK…ERIH), 1066–1088 (FVCQ…ERIH), 1094–1116 (YHCQ…EQRH), and 1125–1147 (YACF…QKKH). Residues Lys-1109, Lys-1132, Lys-1135, Lys-1150, and Lys-1183 each participate in a glycyl lysine isopeptide (Lys-Gly) (interchain with G-Cter in SUMO2) cross-link.

Interacts with CBFA2T3. Interacts with ZBTB4. Interacts with RBBP6. Post-translationally, ubiquitinated by RBBP6; leading to its degradation by the proteasome.

Its subcellular location is the nucleus. It is found in the chromosome. In terms of biological role, transcriptional regulator with bimodal DNA-binding specificity. Binds with a higher affinity to methylated CpG dinucleotides in the consensus sequence 5'-CGCG-3' but can also bind to E-box elements (5'-CACGTG-3'). Can also bind specifically to a single methyl-CpG pair. Represses transcription in a methyl-CpG-dependent manner. Plays an important role in regulating DNA replication and common fragile sites (CFS) stability in a RBBP6- and MCM10-dependent manner; represses expression of MCM10 which plays an important role in DNA-replication. Acts as a transcriptional activator. May be involved in the differentiation and/or survival of late postmitotic neurons. In Homo sapiens (Human), this protein is Zinc finger and BTB domain-containing protein 38.